Reading from the N-terminus, the 460-residue chain is Cysteine--tRNA ligase (460 aa).

Cys28 contacts Zn(2+). The 'HIGH' region motif lies at 30 to 40 (MTVYDYCHLGH). Residues Cys209, His234, and Glu238 each contribute to the Zn(2+) site. Positions 266–270 (KMSKS) match the 'KMSKS' region motif. Lys269 is an ATP binding site.

The protein belongs to the class-I aminoacyl-tRNA synthetase family. In terms of assembly, monomer. The cofactor is Zn(2+).

The protein resides in the cytoplasm. The enzyme catalyses tRNA(Cys) + L-cysteine + ATP = L-cysteinyl-tRNA(Cys) + AMP + diphosphate. In Pseudomonas fluorescens (strain ATCC BAA-477 / NRRL B-23932 / Pf-5), this protein is Cysteine--tRNA ligase.